A 172-amino-acid chain; its full sequence is Zinc finger protein 580 (172 aa).

The tract at residues Met-1–Ser-93 is disordered. Residues Met-19–Pro-30 are compositionally biased toward pro residues. A Glycyl lysine isopeptide (Lys-Gly) (interchain with G-Cter in SUMO2) cross-link involves residue Lys-31. The span at Lys-31–Gly-44 shows a compositional bias: low complexity. Residues Gly-75–Pro-86 are compositionally biased toward pro residues. The segment at Tyr-92 to His-114 adopts a C2H2-type 1 zinc-finger fold. Residue Lys-118 forms a Glycyl lysine isopeptide (Lys-Gly) (interchain with G-Cter in SUMO2) linkage. C2H2-type zinc fingers lie at residues Phe-120–His-142 and His-150–His-172.

As to quaternary structure, interacts with SMAD2. As to expression, expressed in endothelial cells.

The protein localises to the nucleus. Its function is as follows. Involved in the regulation of endothelial cell proliferation and migration. Mediates H(2)O(2)-induced leukocyte chemotaxis by elevating interleukin-8 production and may play a role in inflammation. May be involved in transcriptional regulation. This Homo sapiens (Human) protein is Zinc finger protein 580 (ZNF580).